A 550-amino-acid polypeptide reads, in one-letter code: Amino acid transporter AVT1C (550 aa).

Residues M1–Y11 show a composition bias toward polar residues. Disordered stretches follow at residues M1–A44 and Q128–S148. The span at R20–S34 shows a compositional bias: basic and acidic residues. A run of 11 helical transmembrane segments spans residues A165 to A185, W190 to L210, I237 to L257, L283 to V303, I307 to L327, L342 to F362, A377 to G397, I422 to V442, I462 to L484, L488 to V510, and L521 to L541.

It belongs to the amino acid/polyamine transporter 2 family. Amino acid/auxin permease (AAAP) (TC 2.A.18.5) subfamily.

The protein localises to the membrane. The sequence is that of Amino acid transporter AVT1C from Arabidopsis thaliana (Mouse-ear cress).